Consider the following 448-residue polypeptide: Adenosylhomocysteinase (448 aa).

Residues T61, D136, and E161 each contribute to the substrate site. 162–164 (TTA) serves as a coordination point for NAD(+). K191 and D195 together coordinate substrate. NAD(+) is bound by residues N196, 225 to 230 (GYGDVG), E248, N283, 304 to 306 (IGH), and N360.

Belongs to the adenosylhomocysteinase family. It depends on NAD(+) as a cofactor.

It is found in the cytoplasm. It carries out the reaction S-adenosyl-L-homocysteine + H2O = L-homocysteine + adenosine. Its pathway is amino-acid biosynthesis; L-homocysteine biosynthesis; L-homocysteine from S-adenosyl-L-homocysteine: step 1/1. Functionally, may play a key role in the regulation of the intracellular concentration of adenosylhomocysteine. This chain is Adenosylhomocysteinase, found in Rhodopirellula baltica (strain DSM 10527 / NCIMB 13988 / SH1).